Here is a 577-residue protein sequence, read N- to C-terminus: Protein CBFA2T1 (577 aa).

The segment covering 1-10 (MPDRTEKHST) has biased composition (basic and acidic residues). A disordered region spans residues 1 to 87 (MPDRTEKHST…SSSSLANQQL (87 aa)). Ser14 is subject to Phosphoserine. Positions 42 to 59 (SSFTPTTLTNGTSHSPTA) are enriched in polar residues. The segment covering 68-87 (NGFSNGPSSSSSSSLANQQL) has biased composition (low complexity). The 96-residue stretch at 93–188 (ARQLSKLKRF…NPAQYLAQHE (96 aa)) folds into the TAFH domain. A disordered region spans residues 203–271 (SELLLDVNEN…LPHPTPPPPQ (69 aa)). Positions 211 to 237 (ENGKRRTPDRTKENGFDREPLHSEHPS) are enriched in basic and acidic residues. Over residues 244-258 (SPGQRYSPNNGLSYQ) the composition is skewed to polar residues. The segment covering 262–271 (LPHPTPPPPQ) has biased composition (pro residues). Residues 310-356 (QEEMIDHRLTDREWAEEWKHLDHLLNCIMDMVEKTRRSLTVLRRCQE) form an important for oligomerization region. A nervy homology region 2 (NHR2) region spans residues 310–356 (QEEMIDHRLTDREWAEEWKHLDHLLNCIMDMVEKTRRSLTVLRRCQE). The tract at residues 374–396 (DLKKGGSSSSSHSRQQSPVNPDP) is disordered. The segment covering 380-390 (SSSSSHSRQQS) has biased composition (low complexity). Position 390 is a phosphoserine (Ser390). The interval 416–465 (EEIWKKAEEAVNEVKRQAMTELQKAVSEAERKAHDMITTERAKMERTVAE) is nervy homology region 3 (NHR3). Residues Cys488, Cys491, Cys499, Cys502, Cys508, Cys512, His520, and Cys524 each coordinate Zn(2+). The MYND-type zinc finger occupies 488 to 524 (CWNCGRKASETCSGCNTARYCGSFCQHKDWEKHHHIC). Residues 529–577 (QAPQQGDTPAVSSSVTPSSGAGSPMDTPPAATPRSTTPGTPSTIETTPR) form a disordered region. 2 stretches are compositionally biased toward low complexity: residues 536 to 553 (TPAV…GSPM) and 560 to 577 (TPRS…TTPR).

The protein belongs to the CBFA2T family. Homotetramer. Heterotetramer with CBFA2T2 and CBFA2T3. Interacts with TCF12, SIN3A, HDAC1, HDAC2, HDAC3, NCOR1 and NCOR2. Interacts with ATN1 (via its N-terminus); the interaction enhances the transcriptional repression.

It is found in the nucleus. Transcriptional corepressor which facilitates transcriptional repression via its association with DNA-binding transcription factors and recruitment of other corepressors and histone-modifying enzymes. Can repress the expression of MMP7 in a ZBTB33-dependent manner. Can repress transactivation mediated by TCF12. Acts as a negative regulator of adipogenesis. The chain is Protein CBFA2T1 (Runx1t1) from Mus musculus (Mouse).